A 218-amino-acid polypeptide reads, in one-letter code: MATDQKRGLLIVFEGLDRSGKSTQAKRLVESINKKSTESGDASSSPSAVLQAFPDRSSSIGKLIDQYLRKEIDMDEHALHLLFSADRFSKNQMIRDNIAKGIDVICDRYCYSGVAYSLAKGLPEQWVRSSDVGLPKPDAVLFFDVSPEVAAQRGGFGEERLETATIQQKVAAVMPTLRDDAYWKTVNADGDLDSVEKNVFRIYENLDREKPFESLEKI.

ATP is bound at residue 15–22 (GLDRSGKS).

It belongs to the thymidylate kinase family.

It carries out the reaction dTMP + ATP = dTDP + ADP. It participates in pyrimidine metabolism; dTTP biosynthesis. In terms of biological role, catalyzes the conversion of dTMP to dTDP. This chain is Thymidylate kinase, found in Caenorhabditis elegans.